Consider the following 897-residue polypeptide: Translation initiation factor IF-2 (897 aa).

Positions 52 to 310 are disordered; sequence EHGSAPDKLT…LLQQGFQKPA (259 aa). Residues 68 to 82 are compositionally biased toward polar residues; the sequence is STLNVPGTGGKSKSV. Basic and acidic residues-rich tracts occupy residues 85–159 and 166–217; these read EVRK…KDKV and EMTK…ENEK. Positions 256-272 are enriched in basic residues; the sequence is GRTRTASKTARPQKKGN. A compositionally biased stretch (basic and acidic residues) spans 273–286; sequence KHAESKADREEARA. The region spanning 396–565 is the tr-type G domain; it reads PRAPVVTIMG…LLQAEVLELK (170 aa). The segment at 405–412 is G1; sequence GHVDHGKT. Residue 405-412 participates in GTP binding; the sequence is GHVDHGKT. Positions 430 to 434 are G2; it reads GITQH. The interval 451 to 454 is G3; it reads DTPG. Residues 451–455 and 505–508 each bind GTP; these read DTPGH and NKID. Positions 505 to 508 are G4; that stretch reads NKID. The G5 stretch occupies residues 541–543; sequence SAK.

Belongs to the TRAFAC class translation factor GTPase superfamily. Classic translation factor GTPase family. IF-2 subfamily.

The protein resides in the cytoplasm. Functionally, one of the essential components for the initiation of protein synthesis. Protects formylmethionyl-tRNA from spontaneous hydrolysis and promotes its binding to the 30S ribosomal subunits. Also involved in the hydrolysis of GTP during the formation of the 70S ribosomal complex. In Enterobacter cloacae, this protein is Translation initiation factor IF-2 (infB).